The following is a 710-amino-acid chain: MLKQVFETTDLKNSFQVEIGTYARNVDPSVLIRFQDTVVLTTTVFSNKKNNFDFLPLTVIYQEKFYAAGKIPGSFLRREGRSTDHEILSSRLIDRSLRPLFPKEFRQEIQVINTVLSSNPDFKSEIASILGSSLSLLISEIPFFEPVAGVYVAYIQNQFVINPNAQQLTNSPLHLLVAGTKKNVVMIEAHASEVSEEMFLEAIVFAHEYIKKLCLFQEDVQKKVGQTKKLIDLDAELQSLEKEFNEQYHEQTRTLVANVFEQDQKNDLQVFKKKILAKAQQKAFVKTIDQITFFDVEEQKNYLLLIENLFQKLFNQEMRNYIIKNKKRPDKRTLEEVRNLDSQIDLLPRPHGSALFTRGQTQSLAVVTLGTLSESKIIDDLSGESNKRFMLHYNFPPFAVGSIGRYAAPSRREIGHGNLAEKAILPLLPEENDFPYAIRVVSEILESNGSSSQATVCATSMSLMAAGVPLKRAVSGIAMGLFMDSKTNEYVILSDIQGLEDHIGDMDLKIAGSDKGITALQMDLKIEGISQAILKQAFFQAKKGRLHILEHMNKTIASPRKEMSQYAPKVQMFQIKPEKIRDVIGSAGKIINQIIENHDGVKIDIEQDGRIFVMHSNLETVKQAILFIKNLIQDAEVNSIYHAHISRFLNDKAGNILGAFAQVSPSIEGLIRFSKAKKENDVVKIGDKVLVKCVKINERGRIDFVLISKK.

The Mg(2+) site is built by Asp501 and Asp507. The region spanning 568–628 (PKVQMFQIKP…ETVKQAILFI (61 aa)) is the KH domain. The S1 motif domain maps to 638–710 (NSIYHAHISR…RIDFVLISKK (73 aa)).

This sequence belongs to the polyribonucleotide nucleotidyltransferase family. Mg(2+) serves as cofactor.

Its subcellular location is the cytoplasm. The enzyme catalyses RNA(n+1) + phosphate = RNA(n) + a ribonucleoside 5'-diphosphate. Its function is as follows. Involved in mRNA degradation. Catalyzes the phosphorolysis of single-stranded polyribonucleotides processively in the 3'- to 5'-direction. The chain is Polyribonucleotide nucleotidyltransferase from Phytoplasma australiense.